Consider the following 158-residue polypeptide: Transcription elongation factor GreA (158 aa).

The stretch at 47–74 forms a coiled coil; the sequence is AEYHAAKEEQSHNEGRIAELEDKLARAD.

It belongs to the GreA/GreB family.

Its function is as follows. Necessary for efficient RNA polymerase transcription elongation past template-encoded arresting sites. The arresting sites in DNA have the property of trapping a certain fraction of elongating RNA polymerases that pass through, resulting in locked ternary complexes. Cleavage of the nascent transcript by cleavage factors such as GreA or GreB allows the resumption of elongation from the new 3'terminus. GreA releases sequences of 2 to 3 nucleotides. The chain is Transcription elongation factor GreA from Bradyrhizobium sp. (strain BTAi1 / ATCC BAA-1182).